A 331-amino-acid chain; its full sequence is Adenosine deaminase (331 aa).

Positions 12 and 14 each coordinate Zn(2+). Substrate is bound by residues His14, Asp16, and Gly170. His197 lines the Zn(2+) pocket. Glu200 acts as the Proton donor in catalysis. Asp278 contributes to the Zn(2+) binding site.

The protein belongs to the metallo-dependent hydrolases superfamily. Adenosine and AMP deaminases family. Adenosine deaminase subfamily. It depends on Zn(2+) as a cofactor.

The enzyme catalyses adenosine + H2O + H(+) = inosine + NH4(+). It carries out the reaction 2'-deoxyadenosine + H2O + H(+) = 2'-deoxyinosine + NH4(+). In terms of biological role, catalyzes the hydrolytic deamination of adenosine and 2-deoxyadenosine. In Vibrio vulnificus (strain YJ016), this protein is Adenosine deaminase.